The primary structure comprises 194 residues: Dof zinc finger protein DOF1.7 (194 aa).

A Dof-type zinc finger spans residues 33 to 87; that stretch reads LKCPRCDSPNTKFCYYNNYNLSQPRHFCKNCRRYWTKGGALRNIPVGGGTRKSNK. 4 residues coordinate Zn(2+): Cys35, Cys38, Cys60, and Cys63. The segment at 74-125 is disordered; it reads RNIPVGGGTRKSNKRSGSSPSSNLKNQTVAEKPDHHGSGSEEKEERVSGQEM. Low complexity predominate over residues 88-99; sequence RSGSSPSSNLKN. Basic and acidic residues predominate over residues 104–121; sequence EKPDHHGSGSEEKEERVS.

The protein resides in the nucleus. Functionally, transcription factor that binds specifically to a 5'-AA[AG]G-3' consensus core sequence. In Arabidopsis thaliana (Mouse-ear cress), this protein is Dof zinc finger protein DOF1.7 (DOF1.7).